The following is an 82-amino-acid chain: RNA-binding protein Hfq (82 aa).

Residues 11 to 71 form the Sm domain; it reads DTFLNHVRKT…ISTIMPGAPI (61 aa).

The protein belongs to the Hfq family. Homohexamer.

Its function is as follows. RNA chaperone that binds small regulatory RNA (sRNAs) and mRNAs to facilitate mRNA translational regulation in response to envelope stress, environmental stress and changes in metabolite concentrations. Also binds with high specificity to tRNAs. The polypeptide is RNA-binding protein Hfq (Bradyrhizobium diazoefficiens (strain JCM 10833 / BCRC 13528 / IAM 13628 / NBRC 14792 / USDA 110)).